A 482-amino-acid chain; its full sequence is Isoxanthopterin deaminase (482 aa).

The Zn(2+) site is built by H74 and H76. A substrate-binding site is contributed by Q79. A Zn(2+)-binding site is contributed by H246. Residues E249 and H283 each contribute to the substrate site. Residues H283 and D334 each coordinate Zn(2+).

Belongs to the metallo-dependent hydrolases superfamily. ATZ/TRZ family. Requires Zn(2+) as cofactor.

It catalyses the reaction a 2-amino-4-hydroxypteridine + H2O + H(+) = a 2,4-dihydroxypteridine + NH4(+). The chain is Isoxanthopterin deaminase from Unknown prokaryotic organism.